The following is a 329-amino-acid chain: Probable ABC transporter permease protein MG188 (329 aa).

6 consecutive transmembrane segments (helical) span residues 30-50 (FLLF…PFFL), 96-116 (LISL…IVFV), 128-148 (VFFL…VYIF), 176-196 (ALWA…VLII), 234-254 (LIFL…LALF), and 283-303 (NLAG…GLVL). The ABC transmembrane type-1 domain maps to 88 to 303 (LRNSFLYSLI…VLGVCYGLVL (216 aa)).

This sequence belongs to the binding-protein-dependent transport system permease family. MalFG subfamily.

It localises to the cell membrane. Probably part of a binding-protein-dependent transport system. Probably responsible for the translocation of the substrate across the membrane. The protein is Probable ABC transporter permease protein MG188 of Mycoplasma genitalium (strain ATCC 33530 / DSM 19775 / NCTC 10195 / G37) (Mycoplasmoides genitalium).